The primary structure comprises 417 residues: Serine hydroxymethyltransferase 3 (417 aa).

Residues Leu121 and 125–127 (GHL) each bind (6S)-5,6,7,8-tetrahydrofolate. N6-(pyridoxal phosphate)lysine is present on Lys229. 354–356 (SPF) provides a ligand contact to (6S)-5,6,7,8-tetrahydrofolate.

Belongs to the SHMT family. In terms of assembly, homodimer. Requires pyridoxal 5'-phosphate as cofactor.

The protein localises to the cytoplasm. The enzyme catalyses (6R)-5,10-methylene-5,6,7,8-tetrahydrofolate + glycine + H2O = (6S)-5,6,7,8-tetrahydrofolate + L-serine. It participates in one-carbon metabolism; tetrahydrofolate interconversion. Its pathway is amino-acid biosynthesis; glycine biosynthesis; glycine from L-serine: step 1/1. Its function is as follows. Catalyzes the reversible interconversion of serine and glycine with tetrahydrofolate (THF) serving as the one-carbon carrier. This reaction serves as the major source of one-carbon groups required for the biosynthesis of purines, thymidylate, methionine, and other important biomolecules. Also exhibits THF-independent aldolase activity toward beta-hydroxyamino acids, producing glycine and aldehydes, via a retro-aldol mechanism. This chain is Serine hydroxymethyltransferase 3, found in Pseudomonas aeruginosa (strain ATCC 15692 / DSM 22644 / CIP 104116 / JCM 14847 / LMG 12228 / 1C / PRS 101 / PAO1).